Reading from the N-terminus, the 270-residue chain is Chymotrypsin-like elastase family member 3B (270 aa).

The or 16 signal peptide spans 1-15; the sequence is MMLRLLSSLLLVAVA. Positions 16-28 are cleaved as a propeptide — activation peptide; that stretch reads SGYGPPSSRPSSR. The 240-residue stretch at 29 to 268 folds into the Peptidase S1 domain; the sequence is VVNGEDAVPY…FIDWIEETIA (240 aa). A disulfide bond links cysteine 58 and cysteine 74. The active-site Charge relay system is histidine 73. A glycan (N-linked (GlcNAc...) asparagine) is linked at asparagine 114. Residues cysteine 117 and cysteine 120 are joined by a disulfide bond. Aspartate 123 functions as the Charge relay system in the catalytic mechanism. Intrachain disulfides connect cysteine 157/cysteine 223, cysteine 188/cysteine 204, and cysteine 213/cysteine 244. Catalysis depends on serine 217, which acts as the Charge relay system.

It belongs to the peptidase S1 family. Elastase subfamily. Pancreas. Not detectable in keratinocytes.

It carries out the reaction Preferential cleavage: Ala-|-Xaa. Does not hydrolyze elastin.. Its function is as follows. Efficient protease with alanine specificity but only little elastolytic activity. This is Chymotrypsin-like elastase family member 3B (CELA3B) from Homo sapiens (Human).